The chain runs to 144 residues: Hemoglobin embryonic subunit alpha (144 aa).

A Globin domain is found at 3–144 (SLSAKDKDVV…LALALAEKYR (142 aa)). Residue histidine 61 participates in O2 binding. Histidine 90 contributes to the heme b binding site.

Belongs to the globin family. As to quaternary structure, heterotetramer of two alpha chains and two beta chains. In terms of tissue distribution, red blood cells.

In terms of biological role, involved in oxygen transport from gills to the various peripheral tissues. This chain is Hemoglobin embryonic subunit alpha, found in Oryzias latipes (Japanese rice fish).